The primary structure comprises 154 residues: Small ribosomal subunit protein bS16 (154 aa).

Residues 82–154 are disordered; it reads VQERAARSNP…EAAAEESTEA (73 aa). Residues 92–109 are compositionally biased toward basic and acidic residues; that stretch reads KKAEPGEKAKERAEERAA. Low complexity predominate over residues 110 to 129; sequence KLAAAEEAANAPAEEPAAEP. The span at 142-154 shows a compositional bias: acidic residues; it reads PAEEAAAEESTEA.

The protein belongs to the bacterial ribosomal protein bS16 family.

This Rhizorhabdus wittichii (strain DSM 6014 / CCUG 31198 / JCM 15750 / NBRC 105917 / EY 4224 / RW1) (Sphingomonas wittichii) protein is Small ribosomal subunit protein bS16.